Here is a 289-residue protein sequence, read N- to C-terminus: Shikimate dehydrogenase (NADP(+)) (289 aa).

Shikimate-binding positions include 22 to 24 (SRS) and threonine 69. Catalysis depends on lysine 73, which acts as the Proton acceptor. Glutamate 85 is a binding site for NADP(+). 2 residues coordinate shikimate: asparagine 94 and aspartate 109. NADP(+) contacts are provided by residues 134 to 138 (GAGGA), 158 to 163 (NRTLSR), and isoleucine 226. Residue tyrosine 228 participates in shikimate binding. Residue glycine 249 participates in NADP(+) binding.

Belongs to the shikimate dehydrogenase family. As to quaternary structure, homodimer.

The catalysed reaction is shikimate + NADP(+) = 3-dehydroshikimate + NADPH + H(+). Its pathway is metabolic intermediate biosynthesis; chorismate biosynthesis; chorismate from D-erythrose 4-phosphate and phosphoenolpyruvate: step 4/7. Involved in the biosynthesis of the chorismate, which leads to the biosynthesis of aromatic amino acids. Catalyzes the reversible NADPH linked reduction of 3-dehydroshikimate (DHSA) to yield shikimate (SA). This Brucella canis (strain ATCC 23365 / NCTC 10854 / RM-666) protein is Shikimate dehydrogenase (NADP(+)).